Reading from the N-terminus, the 385-residue chain is Histidinol-phosphate aminotransferase (385 aa).

Lys-230 is subject to N6-(pyridoxal phosphate)lysine.

Belongs to the class-II pyridoxal-phosphate-dependent aminotransferase family. The cofactor is pyridoxal 5'-phosphate.

It catalyses the reaction L-histidinol phosphate + 2-oxoglutarate = 3-(imidazol-4-yl)-2-oxopropyl phosphate + L-glutamate. It functions in the pathway amino-acid biosynthesis; L-histidine biosynthesis; L-histidine from 5-phospho-alpha-D-ribose 1-diphosphate: step 7/9. The sequence is that of Histidinol-phosphate aminotransferase from Saccharomyces cerevisiae (strain ATCC 204508 / S288c) (Baker's yeast).